Here is a 240-residue protein sequence, read N- to C-terminus: 1-(5-phosphoribosyl)-5-[(5-phosphoribosylamino)methylideneamino] imidazole-4-carboxamide isomerase (240 aa).

Catalysis depends on D8, which acts as the Proton acceptor. Residue D130 is the Proton donor of the active site.

The protein belongs to the HisA/HisF family.

Its subcellular location is the cytoplasm. It carries out the reaction 1-(5-phospho-beta-D-ribosyl)-5-[(5-phospho-beta-D-ribosylamino)methylideneamino]imidazole-4-carboxamide = 5-[(5-phospho-1-deoxy-D-ribulos-1-ylimino)methylamino]-1-(5-phospho-beta-D-ribosyl)imidazole-4-carboxamide. The protein operates within amino-acid biosynthesis; L-histidine biosynthesis; L-histidine from 5-phospho-alpha-D-ribose 1-diphosphate: step 4/9. The sequence is that of 1-(5-phosphoribosyl)-5-[(5-phosphoribosylamino)methylideneamino] imidazole-4-carboxamide isomerase from Flavobacterium johnsoniae (strain ATCC 17061 / DSM 2064 / JCM 8514 / BCRC 14874 / CCUG 350202 / NBRC 14942 / NCIMB 11054 / UW101) (Cytophaga johnsonae).